Reading from the N-terminus, the 552-residue chain is Protein FAM234A (552 aa).

Over 1–48 the chain is Cytoplasmic; that stretch reads MTDGKDLEAEIHPLKSENRKVPENAGALAGKEPRGTPAPQTRLSHCRT. The chain crosses the membrane as a helical; Signal-anchor for type II membrane protein span at residues 49–69; sequence AAFFLSLFACLLVVFVVSFII. Topologically, residues 70-552 are extracellular; that stretch reads PCPDRPALQG…LSRLRYRSEA (483 aa). N-linked (GlcNAc...) asparagine glycosylation is found at Asn-115, Asn-238, and Asn-473.

It belongs to the FAM234 family.

Its subcellular location is the membrane. This is Protein FAM234A (FAM234A) from Bos taurus (Bovine).